We begin with the raw amino-acid sequence, 319 residues long: Putative peptide biosynthesis protein YydG (319 aa).

In terms of domain architecture, Radical SAM core spans 1-214 (MYNKTVSINL…HCPGYDIVYH (214 aa)). The [4Fe-4S] cluster site is built by Cys14, Cys18, and Cys21.

Requires [4Fe-4S] cluster as cofactor.

In terms of biological role, required for production of the modified peptide YydF. May activate a metalloenzyme (Potential). This Bacillus subtilis (strain 168) protein is Putative peptide biosynthesis protein YydG (yydG).